We begin with the raw amino-acid sequence, 90 residues long: uncharacterized protein (90 aa).

A disordered region spans residues 53–90 (WRARPDANDADTTSSSSSSETCTESDDSSDVPPARYAV). Low complexity predominate over residues 63-74 (DTTSSSSSSETC).

This is an uncharacterized protein from Orgyia pseudotsugata (Douglas-fir tussock moth).